Here is a 99-residue protein sequence, read N- to C-terminus: NADH-quinone oxidoreductase subunit K (99 aa).

The next 3 helical transmembrane spans lie at 3 to 23 (PANY…GVLL), 28 to 48 (IVMF…FVTF), and 59 to 79 (MIAF…LAII).

Belongs to the complex I subunit 4L family. NDH-1 is composed of 14 different subunits. Subunits NuoA, H, J, K, L, M, N constitute the membrane sector of the complex.

Its subcellular location is the cell membrane. The enzyme catalyses a quinone + NADH + 5 H(+)(in) = a quinol + NAD(+) + 4 H(+)(out). NDH-1 shuttles electrons from NADH, via FMN and iron-sulfur (Fe-S) centers, to quinones in the respiratory chain. The immediate electron acceptor for the enzyme in this species is believed to be a menaquinone. Couples the redox reaction to proton translocation (for every two electrons transferred, four hydrogen ions are translocated across the cytoplasmic membrane), and thus conserves the redox energy in a proton gradient. This chain is NADH-quinone oxidoreductase subunit K, found in Mycobacterium bovis (strain ATCC BAA-935 / AF2122/97).